A 337-amino-acid chain; its full sequence is Equatorin (337 aa).

Positions Met-1–Leu-20 are cleaved as a signal peptide. Residues Gln-21–Lys-183 are Lumenal-facing. The interval Ser-110 to Thr-130 is disordered. The span at Glu-117 to Arg-126 shows a compositional bias: basic and acidic residues. An N-linked (GlcNAc...) asparagine glycan is attached at Asn-145. Residues Leu-184–Phe-204 traverse the membrane as a helical segment. At Ala-205–Asn-337 the chain is on the cytoplasmic side. Residues Ser-259–Gln-283 form a disordered region. Position 336 is a phosphoserine (Ser-336).

Interacts with SNAP25. Post-translationally, highly N- and O-glycosylated; contains sialic acid. MN9 epitope is O-glycosylated. As to expression, sperm specific, including germ cells (at protein level).

It localises to the cytoplasmic vesicle. The protein localises to the secretory vesicle. It is found in the acrosome membrane. Its subcellular location is the acrosome inner membrane. The protein resides in the acrosome outer membrane. It localises to the nucleus. The protein localises to the cytoplasm. Acrosomal membrane-anchored protein involved in the process of fertilization and in acrosome biogenesis. This is Equatorin (Eqtn) from Mus musculus (Mouse).